The primary structure comprises 303 residues: Methionyl-tRNA formyltransferase (303 aa).

109 to 112 (SLLP) contacts (6S)-5,6,7,8-tetrahydrofolate.

The protein belongs to the Fmt family.

The catalysed reaction is L-methionyl-tRNA(fMet) + (6R)-10-formyltetrahydrofolate = N-formyl-L-methionyl-tRNA(fMet) + (6S)-5,6,7,8-tetrahydrofolate + H(+). Its function is as follows. Attaches a formyl group to the free amino group of methionyl-tRNA(fMet). The formyl group appears to play a dual role in the initiator identity of N-formylmethionyl-tRNA by promoting its recognition by IF2 and preventing the misappropriation of this tRNA by the elongation apparatus. This chain is Methionyl-tRNA formyltransferase, found in Helicobacter pylori (strain ATCC 700392 / 26695) (Campylobacter pylori).